The primary structure comprises 280 residues: UPF0276 protein NGO_1946 (280 aa).

This sequence belongs to the UPF0276 family.

The protein is UPF0276 protein NGO_1946 of Neisseria gonorrhoeae (strain ATCC 700825 / FA 1090).